We begin with the raw amino-acid sequence, 291 residues long: uncharacterized protein (291 aa).

Residues 1–58 (MDLKWLQTFIAAAESESFREAAEHLYLTQPAVSQHMRKLEDELDMRLFLHSGRRVVLT) enclose the HTH lysR-type domain. A DNA-binding region (H-T-H motif) is located at residues 18–37 (FREAAEHLYLTQPAVSQHMR).

The protein belongs to the LysR transcriptional regulatory family.

This is an uncharacterized protein from Bacillus subtilis (strain 168).